We begin with the raw amino-acid sequence, 64 residues long: Large ribosomal subunit protein bL35 (64 aa).

The tract at residues 19-44 (TGKLKASRPGRRHKLTGKTPKRKRQL) is disordered. Residues 23 to 44 (KASRPGRRHKLTGKTPKRKRQL) are compositionally biased toward basic residues.

The protein belongs to the bacterial ribosomal protein bL35 family.

The sequence is that of Large ribosomal subunit protein bL35 from Protochlamydia amoebophila (strain UWE25).